The sequence spans 764 residues: Bifunctional type I diterpene synthase tndC (764 aa).

Residues 1 to 324 form a terpene cyclase region; the sequence is MEYRYSTVVD…CPRYHPWSSY (324 aa). The Mg(2+) site is built by aspartate 92 and aspartate 96. The DDXXD 1 signature appears at 92 to 96; the sequence is DDVTD. Positions 224–232 match the NSE/DTE motif; that stretch reads NDLYSWQKE. The interval 325-761 is prenyltransferase; sequence NERQLDWMKN…FQLRLILEML (437 aa). The segment at 377-403 is disordered; sequence AVNGNGASHTSSIKGSTGGNGVTHSPV. The span at 381 to 391 shows a compositional bias: polar residues; it reads NGASHTSSIKG. Isopentenyl diphosphate is bound by residues lysine 484, arginine 487, and histidine 516. Residues aspartate 523 and aspartate 527 each coordinate Mg(2+). The DDXXD 2 motif lies at 523 to 527; sequence DDLED. Residue arginine 532 participates in dimethylallyl diphosphate binding. Position 533 (arginine 533) interacts with isopentenyl diphosphate. Dimethylallyl diphosphate is bound by residues lysine 610, threonine 611, glutamine 646, asparagine 653, lysine 663, and lysine 673.

In the N-terminal section; belongs to the terpene synthase family. This sequence in the C-terminal section; belongs to the FPP/GGPP synthase family.

It catalyses the reaction isopentenyl diphosphate + (2E,6E)-farnesyl diphosphate = (2E,6E,10E)-geranylgeranyl diphosphate + diphosphate. The catalysed reaction is (2E,6E,10E)-geranylgeranyl diphosphate = talarodiene + diphosphate. The protein operates within secondary metabolite biosynthesis; terpenoid biosynthesis. Bifunctional type I diterpene synthase; part of the gene cluster that mediates the biosynthesis of talaronoid C, a fusicoccane diterpenoid with an unprecedented tricyclic 5/8/6 ring system. The first step in the pathway is performed by the fusicoccadiene synthase tndC that possesses both prenyl transferase and terpene cyclase activity, converting isopentenyl diphosphate and dimethylallyl diphosphate into geranylgeranyl diphosphate (GGDP) and further converting GGDP into talarodiene, a precursor for talaronoid C. The remaining enzymes from the cluster include the cytochrome P450 monooxygenase tndB, the aldehyde reductase tndE and the alcohol dehydrogenase tndF that are involved in the conversion of talarodiene into talaronoid C. The sequence is that of Bifunctional type I diterpene synthase tndC from Aspergillus flavipes.